A 397-amino-acid polypeptide reads, in one-letter code: MMSLSGSSGRTIGRPPFTPTQWEELEHQALIYKYMVSGVPVPPELIFSIRRSLDTSLVSRLLPHQSLGWGCYQMGFGRKPDPEPGRCRRTDGKKWRCSREAYPDSKYCEKHMHRGRNRARKSLDQNQTTTTPLTSPSLSFTNNNNPSPTLSSSSSSNSSSTTYSASSSSMDAYSNSNRFGLGGSSSNTRGYFNSHSLDYPYPSTSPKQQQQTLHHASALSLHQNTNSTSQFNVLASATDHKDFRYFQGIGERVGGVGERTFFPEASRSFQDSPYHHHQQPLATVMNDPYHHCSTDHNKIDHHHTYSSSSSSQHLHHDHDHRQQQCFVLGADMFNKPTRSVLANSSRQDQNQEEDEKDSSESSKKSLHHFFGEDWAQNKNSSDSWLDLSSHSRLDTGS.

Residues 16–51 enclose the QLQ domain; sequence PFTPTQWEELEHQALIYKYMVSGVPVPPELIFSIRR. Short sequence motifs (bipartite nuclear localization signal) lie at residues 78-96 and 114-121; these read RKPD…KKWR and RGRNRARK. Residues 81–125 enclose the WRC domain; that stretch reads DPEPGRCRRTDGKKWRCSREAYPDSKYCEKHMHRGRNRARKSLDQ. Disordered regions lie at residues 108 to 172, 197 to 217, 288 to 320, and 340 to 397; these read CEKH…SMDA, LDYP…HHAS, PYHH…DHDH, and VLAN…DTGS. Positions 111–120 are enriched in basic residues; that stretch reads HMHRGRNRAR. Low complexity predominate over residues 128–172; sequence TTTTPLTSPSLSFTNNNNPSPTLSSSSSSNSSSTTYSASSSSMDA. Positions 288–298 are enriched in basic and acidic residues; it reads PYHHCSTDHNK.

It belongs to the GRF family. In terms of assembly, interacts with GIF1. Strongly expressed in actively growing and developing tissues, such as roots, upper stems, and shoot tips containing the shoot apical meristem (SAM) and flower buds. Also expressed in mature flowers, but weakly expressed in mature stems and leaves.

It is found in the nucleus. Functionally, transcription activator that plays a role in the regulation of cell expansion in leaf and cotyledons tissues. Acts together with GIF1 for the development of appropriate leaf size and shape through the promotion and/or maintenance of cell proliferation activity in leaf primordia. The polypeptide is Growth-regulating factor 5 (GRF5) (Arabidopsis thaliana (Mouse-ear cress)).